A 319-amino-acid polypeptide reads, in one-letter code: Acetyl-coenzyme A carboxylase carboxyl transferase subunit alpha (319 aa).

The CoA carboxyltransferase C-terminal domain maps to lysine 39–glycine 293.

It belongs to the AccA family. In terms of assembly, acetyl-CoA carboxylase is a heterohexamer composed of biotin carboxyl carrier protein (AccB), biotin carboxylase (AccC) and two subunits each of ACCase subunit alpha (AccA) and ACCase subunit beta (AccD).

The protein localises to the cytoplasm. The catalysed reaction is N(6)-carboxybiotinyl-L-lysyl-[protein] + acetyl-CoA = N(6)-biotinyl-L-lysyl-[protein] + malonyl-CoA. Its pathway is lipid metabolism; malonyl-CoA biosynthesis; malonyl-CoA from acetyl-CoA: step 1/1. Functionally, component of the acetyl coenzyme A carboxylase (ACC) complex. First, biotin carboxylase catalyzes the carboxylation of biotin on its carrier protein (BCCP) and then the CO(2) group is transferred by the carboxyltransferase to acetyl-CoA to form malonyl-CoA. The polypeptide is Acetyl-coenzyme A carboxylase carboxyl transferase subunit alpha (Parvibaculum lavamentivorans (strain DS-1 / DSM 13023 / NCIMB 13966)).